The primary structure comprises 704 residues: Acetyl-coenzyme A synthetase 1 (704 aa).

CoA is bound by residues 239–242 and Thr358; that span reads RGGK. Residues 434–436, 458–463, Asp550, and Arg565 contribute to the ATP site; these read GEP and DTYWQT. Ser573 provides a ligand contact to CoA. Position 576 (Arg576) interacts with ATP. Arg641 serves as a coordination point for CoA. The Microbody targeting signal motif lies at 702 to 704; sequence VKL.

The protein belongs to the ATP-dependent AMP-binding enzyme family.

The protein resides in the microsome. It localises to the endoplasmic reticulum. It carries out the reaction acetate + ATP + CoA = acetyl-CoA + AMP + diphosphate. This chain is Acetyl-coenzyme A synthetase 1 (ACS1), found in Candida glabrata (strain ATCC 2001 / BCRC 20586 / JCM 3761 / NBRC 0622 / NRRL Y-65 / CBS 138) (Yeast).